The sequence spans 295 residues: 3-methyl-2-oxobutanoate hydroxymethyltransferase (295 aa).

The disordered stretch occupies residues 1 to 30 (MTSGRAMSPEETAPYGTGPARAESAPDAPA). Mg(2+) contacts are provided by D76 and D115. 3-methyl-2-oxobutanoate-binding positions include 76–77 (DS), D115, and K145. Mg(2+) is bound at residue E147. The active-site Proton acceptor is the E213.

This sequence belongs to the PanB family. As to quaternary structure, homodecamer; pentamer of dimers. Mg(2+) serves as cofactor.

Its subcellular location is the cytoplasm. The catalysed reaction is 3-methyl-2-oxobutanoate + (6R)-5,10-methylene-5,6,7,8-tetrahydrofolate + H2O = 2-dehydropantoate + (6S)-5,6,7,8-tetrahydrofolate. It participates in cofactor biosynthesis; (R)-pantothenate biosynthesis; (R)-pantoate from 3-methyl-2-oxobutanoate: step 1/2. Its function is as follows. Catalyzes the reversible reaction in which hydroxymethyl group from 5,10-methylenetetrahydrofolate is transferred onto alpha-ketoisovalerate to form ketopantoate. The polypeptide is 3-methyl-2-oxobutanoate hydroxymethyltransferase (Nocardioides sp. (strain ATCC BAA-499 / JS614)).